A 474-amino-acid polypeptide reads, in one-letter code: Cysteine--tRNA ligase (474 aa).

Cys29 contacts Zn(2+). The 'HIGH' region signature appears at Ala31–His41. Zn(2+) contacts are provided by Cys211, His236, and Glu240. The 'KMSKS' region motif lies at Lys267–Ser271. Lys270 provides a ligand contact to ATP.

It belongs to the class-I aminoacyl-tRNA synthetase family. In terms of assembly, monomer. Zn(2+) is required as a cofactor.

The protein resides in the cytoplasm. The catalysed reaction is tRNA(Cys) + L-cysteine + ATP = L-cysteinyl-tRNA(Cys) + AMP + diphosphate. The sequence is that of Cysteine--tRNA ligase from Beutenbergia cavernae (strain ATCC BAA-8 / DSM 12333 / CCUG 43141 / JCM 11478 / NBRC 16432 / NCIMB 13614 / HKI 0122).